The sequence spans 229 residues: Heptaprenylglyceryl phosphate synthase (229 aa).

Lys-12 is a sn-glycerol 1-phosphate binding site. Asp-14 and Ser-40 together coordinate Mg(2+). Sn-glycerol 1-phosphate-binding positions include 159-164 (YLEYSG), Gly-189, and 209-210 (GN).

It belongs to the GGGP/HepGP synthase family. Group I subfamily. In terms of assembly, homodimer. The cofactor is Mg(2+).

It carries out the reaction sn-glycerol 1-phosphate + all-trans-heptaprenyl diphosphate = 3-heptaprenyl-sn-glycero-1-phosphate + diphosphate. Its pathway is membrane lipid metabolism; glycerophospholipid metabolism. Prenyltransferase that catalyzes in vivo the transfer of the heptaprenyl moiety of heptaprenyl pyrophosphate (HepPP; 35 carbon atoms) to the C3 hydroxyl of sn-glycerol-1-phosphate (G1P), producing heptaprenylglyceryl phosphate (HepGP). This reaction is an ether-bond-formation step in the biosynthesis of archaea-type G1P-based membrane lipids found in Bacillales. The protein is Heptaprenylglyceryl phosphate synthase of Bacillus cereus (strain ZK / E33L).